Here is a 179-residue protein sequence, read N- to C-terminus: Zinc finger HIT domain-containing protein 3 (179 aa).

Zn(2+)-binding residues include C11, C14, C22, C25, C30, C34, H38, and C49. The HIT-type zinc finger occupies 11–49 (CVVCLEKPKYRCPACRVPYCSLPCFRKHKAPPLQQLPVC). A Phosphoserine modification is found at S104.

As to quaternary structure, thyroid receptor interacting proteins (TRIPs) specifically interact with the ligand binding domain of the thyroid receptor (TR). Requires the presence of thyroid hormone for its interaction. Interacts with NUFIP1. Interacts (via HIT-type zinc finger) with the RUVBL1/RUVBL2 complex in the presence of ADP.

It localises to the cytoplasm. The protein localises to the nucleus. The polypeptide is Zinc finger HIT domain-containing protein 3 (ZNHIT3) (Bos taurus (Bovine)).